The following is a 102-amino-acid chain: Putative sortase YwpE (102 aa).

The Proton donor/acceptor role is filled by histidine 17. Catalysis depends on cysteine 78, which acts as the Acyl-thioester intermediate.

Belongs to the bacterial sortase family.

In terms of biological role, seems not to play a major role if any as a sortase. In Bacillus subtilis (strain 168), this protein is Putative sortase YwpE (ywpE).